Here is a 211-residue protein sequence, read N- to C-terminus: UPF0056 membrane protein YvbG (211 aa).

6 helical membrane-spanning segments follow: residues 1 to 21 (MMFS…NPIG), 47 to 67 (ILSF…FKLF), 69 to 89 (INIH…AYNL), 114 to 134 (ISVT…ATVM), 150 to 170 (MIGI…SAFI), and 188 to 208 (LILA…MFPV).

The protein belongs to the UPF0056 (MarC) family.

Its subcellular location is the cell membrane. This chain is UPF0056 membrane protein YvbG (yvbG), found in Bacillus subtilis (strain 168).